A 630-amino-acid chain; its full sequence is Chaperone protein HtpG (630 aa).

The tract at residues 1 to 343 (MAKHQFQTEA…SKDLPLNVSR (343 aa)) is a; substrate-binding. Residues 344–554 (EILQSNAVMA…KEDPAFMMAQ (211 aa)) form a b region. Residues 555–630 (IMKQMGQSGD…RLNRVIAKAI (76 aa)) form a c region.

The protein belongs to the heat shock protein 90 family. As to quaternary structure, homodimer.

It is found in the cytoplasm. Molecular chaperone. Has ATPase activity. The protein is Chaperone protein HtpG of Sulfurimonas denitrificans (strain ATCC 33889 / DSM 1251) (Thiomicrospira denitrificans (strain ATCC 33889 / DSM 1251)).